Here is a 424-residue protein sequence, read N- to C-terminus: Zinc metalloproteinase-disintegrin-like brevilysin H2b (424 aa).

Gln-1 carries the post-translational modification Pyrrolidone carboxylic acid. The Peptidase M12B domain occupies 9 to 207; the sequence is RYVKLAIVAD…YKPQCILNEP (199 aa). N-linked (GlcNAc...) asparagine glycosylation occurs at Asn-69. A Ca(2+)-binding site is contributed by Asp-96. Disulfide bonds link Cys-120-Cys-202, Cys-164-Cys-186, and Cys-166-Cys-169. Position 145 (His-145) interacts with Zn(2+). Glu-146 is a catalytic residue. Zn(2+) is bound by residues His-149 and His-155. Asn-185 is a glycosylation site (N-linked (GlcNAc...) asparagine). Ca(2+)-binding residues include Cys-202, Asn-205, Val-217, Asn-220, Leu-222, Glu-224, Glu-227, and Asp-230. The Disintegrin domain occupies 215–301; that stretch reads PPVCGNELLE…DCPTDDLQRN (87 aa). Cystine bridges form between Cys-218–Cys-247, Cys-229–Cys-242, Cys-231–Cys-237, Cys-241–Cys-264, Cys-255–Cys-261, Cys-260–Cys-286, Cys-273–Cys-293, Cys-280–Cys-312, Cys-305–Cys-317, Cys-324–Cys-374, Cys-339–Cys-385, Cys-352–Cys-362, Cys-369–Cys-411, and Cys-405–Cys-417. A D/ECD-tripeptide motif is present at residues 279–281; the sequence is DCD. Ca(2+) is bound by residues Asp-281, Glu-284, and Asp-296.

The protein belongs to the venom metalloproteinase (M12B) family. P-III subfamily. P-IIIa sub-subfamily. Monomer. Zn(2+) serves as cofactor. Post-translationally, glycosylated. Expressed by the venom gland.

The protein resides in the secreted. With respect to regulation, its proteolytic activity is inhibited by EDTA, TPEN, 1,10-phenanthroline, and some thiol compounds, but is enhanced by alkaline earth metal ions (Mg2+, Ca2+, Sr2+, and Ba2+). Its activity is not modulated by urea (4 M). In terms of biological role, non-hemorrhagic metalloproteinase that degrades fibrinogen. The alpha chain (FGA) is rapidly degraded, the beta chain (FGB) is degraded very slowly, while the gamma chain is left intact. Shows a prefential cleavage at X-Leu bonds. Cleaves insulin B chain at '29-His-|-Leu-30', '33-Ser-|-His-34', '38-Ala-|-Leu-39' and '40-Tyr-|-Leu-41' bonds. This chain is Zinc metalloproteinase-disintegrin-like brevilysin H2b, found in Gloydius brevicauda (Korean slamosa snake).